A 226-amino-acid chain; its full sequence is Transcriptional regulatory protein CitT (226 aa).

A Response regulatory domain is found at 3–119 (HIAIAEDDFR…KFRQVLLQYK (117 aa)). Aspartate 54 bears the 4-aspartylphosphate mark. Residues 178-197 (AEELGEKMGASRTTARRYAE) constitute a DNA-binding region (H-T-H motif).

Post-translationally, phosphorylated by CitS.

It is found in the cytoplasm. Member of the two-component regulatory system CitT/CitS. Regulates the expression of the citM-yflN operon. Phosphorylated CitT binds to the citM promoter to activate the transcription of the citM-yflN operon. The sequence is that of Transcriptional regulatory protein CitT (citT) from Bacillus subtilis (strain 168).